The chain runs to 38 residues: Large ribosomal subunit protein bL36 (38 aa).

This sequence belongs to the bacterial ribosomal protein bL36 family.

The chain is Large ribosomal subunit protein bL36 from Gemmatimonas aurantiaca (strain DSM 14586 / JCM 11422 / NBRC 100505 / T-27).